The following is a 229-amino-acid chain: Large ribosomal subunit protein uL1 (229 aa).

This sequence belongs to the universal ribosomal protein uL1 family. Part of the 50S ribosomal subunit.

Functionally, binds directly to 23S rRNA. The L1 stalk is quite mobile in the ribosome, and is involved in E site tRNA release. Protein L1 is also a translational repressor protein, it controls the translation of the L11 operon by binding to its mRNA. This chain is Large ribosomal subunit protein uL1, found in Listeria monocytogenes serovar 1/2a (strain ATCC BAA-679 / EGD-e).